Consider the following 757-residue polypeptide: Cellulose synthase-like protein B5 (757 aa).

A run of 2 helical transmembrane segments spans residues 24–44 (AVDLTILGLLYSLLLYRILHI) and 50–70 (VWLLAFFCESCFSLVWLIFTC). Residues D136 and D460 contribute to the active site. 6 consecutive transmembrane segments (helical) span residues 531 to 551 (LAYFWALMCLRSIPELIYCLL), 572 to 592 (IVTLVGMHCLYSLWQFMSLGF), 613 to 633 (LFSIQDIILKLLGISQIGFVI), 671 to 691 (LFIPGTFIMLVNLAALAGYLV), 704 to 724 (GSGLAEACGCILVVMLFLPFL), and 735 to 755 (IPLSTLSKAAFLTVLFVFFCV).

This sequence belongs to the glycosyltransferase 2 family. Plant cellulose synthase-like B subfamily. In terms of tissue distribution, expressed in young seedlings, primarily in the vascular tissue. Expressed in the root cap.

The protein localises to the golgi apparatus membrane. Thought to be a Golgi-localized beta-glycan synthase that polymerize the backbones of noncellulosic polysaccharides (hemicelluloses) of plant cell wall. The chain is Cellulose synthase-like protein B5 (CSLB5) from Arabidopsis thaliana (Mouse-ear cress).